We begin with the raw amino-acid sequence, 948 residues long: Protocadherin alpha-2 (948 aa).

The signal sequence occupies residues 1-22; the sequence is MASSIRRGRGAWTRLLSLLLLA. The Extracellular portion of the chain corresponds to 23-697; the sequence is AWEVGSGQLR…GSEATLVDVN (675 aa). 6 Cadherin domains span residues 30 to 133, 157 to 242, 243 to 350, 351 to 455, 456 to 565, and 588 to 678; these read QLRY…PPIF, ASDA…EPTF, AQSV…TPEV, SITS…APAF, AQPE…APAL, and GHVV…APKA. 4 N-linked (GlcNAc...) asparagine glycosylation sites follow: Asn257, Asn265, Asn362, and Asn548. Residues 698–718 form a helical membrane-spanning segment; it reads VYLIIAICAVSSLLVLTVLLY. The Cytoplasmic portion of the chain corresponds to 719 to 948; it reads TALRCSVPPT…GNSTTDNSDQ (230 aa). The stretch at 734–737 is one PXXP 1 repeat; the sequence is PGKP. The 5 X 4 AA repeats of P-X-X-P stretch occupies residues 734–892; sequence PGKPTLVCSS…PDKFIIPGSP (159 aa). Disordered stretches follow at residues 754–801, 829–854, and 868–948; these read RRQR…RQPN, GPGG…EVSP, and KYGP…NSDQ. The segment covering 783 to 795 has biased composition (basic and acidic residues); sequence AEEKQLSESEYVG. PXXP repeat units follow at residues 797–800, 830–833, 871–874, and 889–892; these read PRQP, PGGP, PGNP, and PGSP. A compositionally biased stretch (basic and acidic residues) spans 907–921; that stretch reads DKSDFITFGKKEETK.

The protein localises to the cell membrane. Its function is as follows. Potential calcium-dependent cell-adhesion protein. May be involved in the establishment and maintenance of specific neuronal connections in the brain. The polypeptide is Protocadherin alpha-2 (PCDHA2) (Homo sapiens (Human)).